Here is a 436-residue protein sequence, read N- to C-terminus: Acetyl-CoA decarbonylase/synthase complex subunit delta 1 (436 aa).

It belongs to the CdhD family. As to quaternary structure, heterodimer of delta and gamma chains. The ACDS complex is made up of alpha, epsilon, beta, gamma and delta chains with a probable stoichiometry of (alpha(2)epsilon(2))(4)-beta(8)-(gamma(1)delta(1))(8) (Potential).

It participates in one-carbon metabolism; methanogenesis from acetate. Part of a complex that catalyzes the reversible cleavage of acetyl-CoA, allowing growth on acetate as sole source of carbon and energy. Probably maintains the overall quaternary structure of the ACDS complex. The polypeptide is Acetyl-CoA decarbonylase/synthase complex subunit delta 1 (cdhD1) (Methanosarcina acetivorans (strain ATCC 35395 / DSM 2834 / JCM 12185 / C2A)).